Consider the following 157-residue polypeptide: MNTIVVAQLQRQFQDYIVSLYQQGFLDNQFSELRKLQDEGTPDFVAEVVSLFFDDCSKLINTMSISLERPDNVDFKQVDSGVHQLKGSSSSVGARRVKNVCISFKECCDVQNREGCLRCLQQVDYEYKMLKTKLQDLFNLEKQILQAGGTIPQVDIN.

Position 1 is an N-acetylmethionine (M1). An HPt domain is found at 41–148; sequence TPDFVAEVVS…NLEKQILQAG (108 aa). H83 bears the Phosphohistidine mark.

As to quaternary structure, interacts with the B-type response regulators ARR1 and ARR2. Binds to AHK2, AHK3, AHK4 and AHK5. Post-translationally, two-component system major event consists of a His-to-Asp phosphorelay between a sensor histidine kinase (HK) and a response regulator (RR). In plants, the His-to-Asp phosphorelay involves an additional intermediate named Histidine-containing phosphotransfer protein (HPt). This multistep phosphorelay consists of a His-Asp-His-Asp sequential transfer of a phosphate group between first a His and an Asp of the HK protein, followed by the transfer to a conserved His of the HPt protein and finally the transfer to an Asp in the receiver domain of the RR protein. Expressed in the whole plant.

The protein resides in the cytoplasm. The protein localises to the cytosol. Its subcellular location is the nucleus. In terms of biological role, functions as a two-component phosphorelay mediator between cytokinin sensor histidine kinases and response regulators (B-type ARRs). Plays an important role in propagating cytokinin signal transduction through the multistep His-to-Asp phosphorelay. The chain is Histidine-containing phosphotransfer protein 5 (AHP5) from Arabidopsis thaliana (Mouse-ear cress).